A 384-amino-acid polypeptide reads, in one-letter code: S-adenosylmethionine synthase (384 aa).

His-15 is an ATP binding site. Asp-17 contributes to the Mg(2+) binding site. Position 43 (Glu-43) interacts with K(+). L-methionine contacts are provided by Glu-56 and Gln-99. The tract at residues Gln-99–Arg-109 is flexible loop. ATP is bound by residues Asp-164 to Lys-166, Arg-230 to Phe-231, Asp-239, Arg-245 to Lys-246, Ala-262, and Lys-266. Asp-239 contributes to the L-methionine binding site. Lys-270 contacts L-methionine.

It belongs to the AdoMet synthase family. In terms of assembly, homotetramer; dimer of dimers. Mg(2+) serves as cofactor. The cofactor is K(+).

Its subcellular location is the cytoplasm. The enzyme catalyses L-methionine + ATP + H2O = S-adenosyl-L-methionine + phosphate + diphosphate. It functions in the pathway amino-acid biosynthesis; S-adenosyl-L-methionine biosynthesis; S-adenosyl-L-methionine from L-methionine: step 1/1. Catalyzes the formation of S-adenosylmethionine (AdoMet) from methionine and ATP. The overall synthetic reaction is composed of two sequential steps, AdoMet formation and the subsequent tripolyphosphate hydrolysis which occurs prior to release of AdoMet from the enzyme. This is S-adenosylmethionine synthase from Edwardsiella ictaluri (strain 93-146).